A 75-amino-acid polypeptide reads, in one-letter code: Penaeidin-3l (75 aa).

Residues 1-19 (MRLVVCLVFLASFALVCQG) form the signal peptide. At Gln-20 the chain carries Pyrrolidone carboxylic acid. 3 disulfide bridges follow: Cys-44–Cys-59, Cys-48–Cys-66, and Cys-60–Cys-67. Position 74 is a serine amide (Ser-74).

It belongs to the penaeidin family.

It localises to the cytoplasmic granule. Antibacterial and antifungal activity. Presents chitin-binding activity. This is Penaeidin-3l from Penaeus setiferus (Atlantic white shrimp).